The primary structure comprises 320 residues: Undecaprenyl-diphosphatase (320 aa).

The next 8 helical transmembrane spans lie at 9–29 (FVLVSAVSAALSVVLFPLEVF), 82–102 (GVAFTAIIQLGSIAAVLWYFW), 130–150 (LGIILGTIPIVFFGLLIKKLI), 161–181 (LGAIAVASIVMSLLLGVGEKL), 191–211 (LTMQDGLLMGLAQALALIPGV), 236–256 (FLLGIPAITLAGLVELKDVFA), 265–285 (LPLIVGVISAAIFSYMAIAGL), and 296–316 (VFIWYRLVFGIAILGAISAGI).

It belongs to the UppP family.

The protein localises to the cell inner membrane. The catalysed reaction is di-trans,octa-cis-undecaprenyl diphosphate + H2O = di-trans,octa-cis-undecaprenyl phosphate + phosphate + H(+). Its function is as follows. Catalyzes the dephosphorylation of undecaprenyl diphosphate (UPP). Confers resistance to bacitracin. In Trichormus variabilis (strain ATCC 29413 / PCC 7937) (Anabaena variabilis), this protein is Undecaprenyl-diphosphatase.